The primary structure comprises 390 residues: Delta-aminolevulinic acid dehydratase, chloroplastic (390 aa).

A chloroplast-targeting transit peptide spans 1–24; it reads MQMMQRNVVGQRPVAGSRRSLVVA. The segment at 34-69 is disordered; the sequence is VSTNGKHRTGVPEGTPIVTPQDLPSRPRRNRRSESF. The active-site Schiff-base intermediate with substrate is the Lys-251. 5-aminolevulinate is bound by residues Arg-261 and Lys-281. Mg(2+) is bound at residue Glu-297. The Schiff-base intermediate with substrate role is filled by Lys-312. 5-aminolevulinate-binding residues include Ser-338 and Tyr-377.

Belongs to the ALAD family. As to quaternary structure, homooctamer. The cofactor is Mg(2+).

The protein resides in the plastid. It localises to the chloroplast. The catalysed reaction is 2 5-aminolevulinate = porphobilinogen + 2 H2O + H(+). It functions in the pathway porphyrin-containing compound metabolism; protoporphyrin-IX biosynthesis; coproporphyrinogen-III from 5-aminolevulinate: step 1/4. Its function is as follows. Catalyzes an early step in the biosynthesis of tetrapyrroles. Binds two molecules of 5-aminolevulinate per subunit, each at a distinct site, and catalyzes their condensation to form porphobilinogen. The sequence is that of Delta-aminolevulinic acid dehydratase, chloroplastic (HEMB) from Chlamydomonas reinhardtii (Chlamydomonas smithii).